A 528-amino-acid polypeptide reads, in one-letter code: MSKNHRKEVDRRRTFGIISHPDAGKTTLTEKLLLFGGAIQMAGAVKARKAARHATSDWMAMEQERGISVTSSVMKFNYRDYEINLLDTPGHQDFSEDTYRVLTAVDSALMVIDSAKGVETQTRKLMEVCRMRNTPIMTFINKLDREGLEPLDLLADIEETLQIECAPLSWPIGMGKRFKGTYNLYRKQLCLFMAGQETRPQDMLVIEDLDDPRLDELLGSQADQLREDIELLEGAANPFEPEEYLKGNQTPVFFGSAINNFGVQEMLDAFVEQAPVPRPAPTTTREISPYEEDFSGFVFKIQANMDPAHRDRIAFFRICSGTFHRGMKVRHHRIGKDVNIANATIFMAQDRANVEEAFPGDIIGIHNHGTIKIGDTFTDKEPLKFTGIPSFAPEHFRRVRLKNPLKSKQLEKGLIQLAEEGAVQLFRPLFNTDYILGAVGVLQFDVIMSRLKNEYSVDAIYEGVEYATARWVECDDRKVLEEFEKKCQVNLAYDAEGNLTYLASSEWRLGHTMEQWPQVVFHKTREHN.

One can recognise a tr-type G domain in the interval 10-278; that stretch reads DRRRTFGIIS…AFVEQAPVPR (269 aa). GTP contacts are provided by residues 19–26, 87–91, and 141–144; these read SHPDAGKT, DTPGH, and NKLD.

This sequence belongs to the TRAFAC class translation factor GTPase superfamily. Classic translation factor GTPase family. PrfC subfamily.

Its subcellular location is the cytoplasm. In terms of biological role, increases the formation of ribosomal termination complexes and stimulates activities of RF-1 and RF-2. It binds guanine nucleotides and has strong preference for UGA stop codons. It may interact directly with the ribosome. The stimulation of RF-1 and RF-2 is significantly reduced by GTP and GDP, but not by GMP. This chain is Peptide chain release factor 3, found in Syntrophotalea carbinolica (strain DSM 2380 / NBRC 103641 / GraBd1) (Pelobacter carbinolicus).